The primary structure comprises 342 residues: Heat-inducible transcription repressor HrcA (342 aa).

The protein belongs to the HrcA family.

Its function is as follows. Negative regulator of class I heat shock genes (grpE-dnaK-dnaJ and groELS operons). Prevents heat-shock induction of these operons. The chain is Heat-inducible transcription repressor HrcA from Shouchella clausii (strain KSM-K16) (Alkalihalobacillus clausii).